The following is an 84-amino-acid chain: RNA-binding protein Hfq (84 aa).

A Sm domain is found at 10–70 (DLFLNVLRRD…ISTIMPFRPV (61 aa)).

It belongs to the Hfq family. In terms of assembly, homohexamer.

In terms of biological role, RNA chaperone that binds small regulatory RNA (sRNAs) and mRNAs to facilitate mRNA translational regulation in response to envelope stress, environmental stress and changes in metabolite concentrations. Also binds with high specificity to tRNAs. This is RNA-binding protein Hfq from Moorella thermoacetica (strain ATCC 39073 / JCM 9320).